The primary structure comprises 340 residues: DNA repair protein RAD51 homolog B (340 aa).

A disordered region spans residues 1 to 22 (MSSSSAHQKASPPIEEEATEHG). The 30-residue stretch at 49–78 (TVESVAYSPRKDLLQIKGISEAKVDKIIEA) folds into the HhH domain. ATP is bound at residue 128 to 135 (GEFRSGKT).

The protein belongs to the RecA family. RAD51 subfamily. As to quaternary structure, self-associates and may interact with XRCC3 homolog. Highly expressed in mitotic and meiotic tissues, but low levels in differentiated tissues.

It localises to the nucleus. In terms of biological role, binds to single and double-stranded DNA and exhibits DNA-dependent ATPase activity. Unwinds duplex DNA. Component of the meiotic recombination pathway. Seems to play a role in mediating chromosome homology search, chromosome pairing and synapsis at early stages and probably chromosome crossing-over at later stages in meiosis. Probably is involved in the repair of meiotic double strand breaks (DBSs) and in homologous recombination. This chain is DNA repair protein RAD51 homolog B (RAD51B), found in Zea mays (Maize).